We begin with the raw amino-acid sequence, 706 residues long: Kinesin-like protein KIF2A (706 aa).

Residues 1 to 217 are globular; sequence MATANFGKIQ…LDYRPLTTAD (217 aa). The segment at 66–139 is disordered; that stretch reads LVPDEEIEPS…AQQNGSVSDI (74 aa). S75 bears the Phosphoserine mark. Phosphothreonine occurs at positions 78 and 97. S100 is modified (phosphoserine). Position 102 is an N6-acetyllysine (K102). Over residues 123-139 the composition is skewed to polar residues; that stretch reads FPEQSSSAQQNGSVSDI. 2 positions are modified to phosphoserine: S135 and S140. The segment at 165 to 186 is disordered; it reads KLQEKREKRRLQQQELREKRAQ. Residues 223–553 enclose the Kinesin motor domain; sequence RICVCVRKRP…LRYANRVKEL (331 aa). ATP is bound at residue 313–320; the sequence is GQTGSGKT. D556 and Q573 each carry phosphoserine. The stretch at 660-699 forms a coiled coil; that stretch reads ATQLEAILEQKIDILTELRDKVKSFRAALQEEEQASKQIN.

It belongs to the TRAFAC class myosin-kinesin ATPase superfamily. Kinesin family. MCAK/KIF2 subfamily. In terms of assembly, interacts with AURKA and PLK1. Interacts with PSRC1. Interacts with MCRS1; the interaction enhances recruitment of KIF2A to the minus ends of spindle microtubules which promotes chromosome alignment.

It localises to the cytoplasm. The protein localises to the cytoskeleton. It is found in the microtubule organizing center. Its subcellular location is the centrosome. The protein resides in the spindle pole. It localises to the spindle. Its function is as follows. Plus end-directed microtubule-dependent motor required for normal brain development. May regulate microtubule dynamics during axonal growth. Required for normal progression through mitosis. Required for normal congress of chromosomes at the metaphase plate. Required for normal spindle dynamics during mitosis. Promotes spindle turnover. Implicated in formation of bipolar mitotic spindles. Has microtubule depolymerization activity. The sequence is that of Kinesin-like protein KIF2A (KIF2A) from Homo sapiens (Human).